A 167-amino-acid polypeptide reads, in one-letter code: UPF0303 protein mlr5144 (167 aa).

It belongs to the UPF0303 family.

This Mesorhizobium japonicum (strain LMG 29417 / CECT 9101 / MAFF 303099) (Mesorhizobium loti (strain MAFF 303099)) protein is UPF0303 protein mlr5144.